The chain runs to 64 residues: Large ribosomal subunit protein bL35 (64 aa).

Residues Met-1–Val-55 form a disordered region. The segment covering Lys-23 to Gln-39 has biased composition (basic residues).

This sequence belongs to the bacterial ribosomal protein bL35 family.

The sequence is that of Large ribosomal subunit protein bL35 from Chlamydia muridarum (strain MoPn / Nigg).